We begin with the raw amino-acid sequence, 132 residues long: Small ribosomal subunit protein uS8c (132 aa).

This sequence belongs to the universal ribosomal protein uS8 family. As to quaternary structure, part of the 30S ribosomal subunit.

The protein localises to the plastid. Its subcellular location is the chloroplast. Functionally, one of the primary rRNA binding proteins, it binds directly to 16S rRNA central domain where it helps coordinate assembly of the platform of the 30S subunit. In Drimys granadensis, this protein is Small ribosomal subunit protein uS8c (rps8).